The chain runs to 181 residues: Translation initiation factor IF-3 (181 aa).

This sequence belongs to the IF-3 family. In terms of assembly, monomer.

The protein resides in the cytoplasm. IF-3 binds to the 30S ribosomal subunit and shifts the equilibrium between 70S ribosomes and their 50S and 30S subunits in favor of the free subunits, thus enhancing the availability of 30S subunits on which protein synthesis initiation begins. In Mycoplasma capricolum subsp. capricolum (strain California kid / ATCC 27343 / NCTC 10154), this protein is Translation initiation factor IF-3.